Reading from the N-terminus, the 449-residue chain is DNA-directed RNA polymerase subunit Rpo1C (449 aa).

A unknown region spans residues 1–68 (MQDVIKKIED…EGEELLKAVE (68 aa)). The segment at 69 to 449 (DEYLRILKVR…TGSVSVIMKK (381 aa)) is DNA-directed RNA polymerase subunit Rpo1C.

The protein belongs to the RNA polymerase beta' chain family. Part of the RNA polymerase complex.

Its subcellular location is the cytoplasm. The catalysed reaction is RNA(n) + a ribonucleoside 5'-triphosphate = RNA(n+1) + diphosphate. In terms of biological role, DNA-dependent RNA polymerase (RNAP) catalyzes the transcription of DNA into RNA using the four ribonucleoside triphosphates as substrates. Forms part of the jaw domain. This chain is DNA-directed RNA polymerase subunit Rpo1C, found in Methanothermobacter thermautotrophicus (strain Winter) (Methanobacterium thermoautotrophicum).